The chain runs to 1414 residues: Phenyloxazoline synthase MbtB (1414 aa).

Residues 5–78 form the Carrier 1 domain; that stretch reads TACSEIIRAE…AWSQLVSAGT (74 aa). At S39 the chain carries O-(pantetheine 4'-phosphoryl)serine. Positions 96-394 are condensation/cyclization; it reads EGEPFPLAPM…SSLLLDVDLT (299 aa). The interval 579 to 975 is adenylation; it reads SYAQLRDQAS…RLPGVHAAAA (397 aa). One can recognise a Carrier 2 domain in the interval 1057-1135; that stretch reads APRTVLQRAL…ALAQLLTGRE (79 aa). The residue at position 1094 (S1094) is an O-(pantetheine 4'-phosphoryl)serine. The interval 1188–1413 is thioesterase; sequence GAVLVFPHAG…AVARMVSADV (226 aa).

It belongs to the ATP-dependent AMP-binding enzyme family. MbtB subfamily. It depends on pantetheine 4'-phosphate as a cofactor. 4'-phosphopantetheine is transferred from CoA to a specific serine in each of the two carrier protein domains, leading to their activation from apo to holo forms.

It functions in the pathway siderophore biosynthesis; mycobactin biosynthesis. In terms of biological role, involved in the initial steps of the mycobactin biosynthetic pathway. Putatively couples activated salicylic acid with serine or threonine and cyclizes this precursor to the hydroxyphenyloxazoline ring system present in this class of siderophores. This is Phenyloxazoline synthase MbtB (mbtB) from Mycobacterium bovis (strain ATCC BAA-935 / AF2122/97).